The following is a 196-amino-acid chain: ATP-dependent Clp protease proteolytic subunit (196 aa).

The active-site Nucleophile is Ser96. His121 is an active-site residue.

This sequence belongs to the peptidase S14 family. Fourteen ClpP subunits assemble into 2 heptameric rings which stack back to back to give a disk-like structure with a central cavity, resembling the structure of eukaryotic proteasomes.

The protein resides in the cytoplasm. It catalyses the reaction Hydrolysis of proteins to small peptides in the presence of ATP and magnesium. alpha-casein is the usual test substrate. In the absence of ATP, only oligopeptides shorter than five residues are hydrolyzed (such as succinyl-Leu-Tyr-|-NHMec, and Leu-Tyr-Leu-|-Tyr-Trp, in which cleavage of the -Tyr-|-Leu- and -Tyr-|-Trp bonds also occurs).. In terms of biological role, cleaves peptides in various proteins in a process that requires ATP hydrolysis. Has a chymotrypsin-like activity. Plays a major role in the degradation of misfolded proteins. The protein is ATP-dependent Clp protease proteolytic subunit of Streptococcus pneumoniae (strain ATCC 700669 / Spain 23F-1).